The sequence spans 330 residues: Phosphate acyltransferase (330 aa).

It belongs to the PlsX family. Homodimer. Probably interacts with PlsY.

Its subcellular location is the cytoplasm. It catalyses the reaction a fatty acyl-[ACP] + phosphate = an acyl phosphate + holo-[ACP]. It functions in the pathway lipid metabolism; phospholipid metabolism. Functionally, catalyzes the reversible formation of acyl-phosphate (acyl-PO(4)) from acyl-[acyl-carrier-protein] (acyl-ACP). This enzyme utilizes acyl-ACP as fatty acyl donor, but not acyl-CoA. The polypeptide is Phosphate acyltransferase (Bacillus anthracis (strain A0248)).